Here is a 235-residue protein sequence, read N- to C-terminus: Small ribosomal subunit protein uS2c (235 aa).

It belongs to the universal ribosomal protein uS2 family.

The protein resides in the plastid. It is found in the chloroplast. In Zygnema circumcarinatum (Green alga), this protein is Small ribosomal subunit protein uS2c (rps2).